We begin with the raw amino-acid sequence, 254 residues long: Putative ankyrin-containing lipoprotein Lxx09580 (254 aa).

The N-terminal stretch at 1–22 (MTEIRYVRLLTLVLASSVLLAG) is a signal peptide. Cys-23 carries the N-palmitoyl cysteine lipid modification. Residue Cys-23 is the site of S-diacylglycerol cysteine attachment. ANK repeat units lie at residues 56–85 (AATASLHAAARSGDAEAVRSALAAGAAIED), 89–118 (GGRTPLVEAAKGNHVEAARALIEAGADVNA), 122–151 (IQDSAYLYAGAEGYLEILRMTLTTGADVNA), 155–184 (FNGTALIPASEHAHTEVVRMLIAAGVDLDH), and 188–222 (PGWTAMQEAIVLGNGGAGAQDVVRQLLAAGANPDI).

It localises to the cell membrane. This is Putative ankyrin-containing lipoprotein Lxx09580 from Leifsonia xyli subsp. xyli (strain CTCB07).